Here is a 141-residue protein sequence, read N- to C-terminus: D-aminoacyl-tRNA deacylase (141 aa).

Residues 133–134 (GP) carry the Gly-cisPro motif, important for rejection of L-amino acids motif.

Belongs to the DTD family. Homodimer.

It is found in the cytoplasm. It carries out the reaction glycyl-tRNA(Ala) + H2O = tRNA(Ala) + glycine + H(+). The enzyme catalyses a D-aminoacyl-tRNA + H2O = a tRNA + a D-alpha-amino acid + H(+). An aminoacyl-tRNA editing enzyme that deacylates mischarged D-aminoacyl-tRNAs. Also deacylates mischarged glycyl-tRNA(Ala), protecting cells against glycine mischarging by AlaRS. Acts via tRNA-based rather than protein-based catalysis; rejects L-amino acids rather than detecting D-amino acids in the active site. By recycling D-aminoacyl-tRNA to D-amino acids and free tRNA molecules, this enzyme counteracts the toxicity associated with the formation of D-aminoacyl-tRNA entities in vivo and helps enforce protein L-homochirality. This Thermobifida fusca (strain YX) protein is D-aminoacyl-tRNA deacylase.